Here is a 351-residue protein sequence, read N- to C-terminus: MKPELTIQLMDTHAGGDVSRIVTGGIDLLPGDTVRAQMEYLRDDADGLRKLLLEEPYGIPEMSVDLLVPATDPRAAAGYIIMEVMGYPIYSGSNTICTATAVLEAGIVPKQEGKQHFMLESPAGLVNIEAIVHDGVVEAVTCEGLPSYIHTYNASINVPGIGEVAYSVAYSGGFYALVDAKSLGFDLTLDEERELARTAHAIVEAIQAARGFSHYTLGDVGPLPFLHFMGPEEKVADGYYRSRSATYVHPGVICRSTTGTGTSARLALMNYEGRIQPGDKLETVSLRDTGFIGEFTTVETEGDYQVVKNSITGKSYVIAHSDIVVNCDDPMVDCDGLHHILSSRHPQRPAT.

It belongs to the proline racemase family.

In terms of biological role, displays neither proline racemase activity nor trans-4-hydroxy-L-proline (t4LHyp) epimerase activity nor t3LHyp dehydratase activity. The sequence is that of Protein Maqu_2141 from Marinobacter nauticus (strain ATCC 700491 / DSM 11845 / VT8) (Marinobacter aquaeolei).